The primary structure comprises 86 residues: Antimicrobial peptide 2 (86 aa).

The N-terminal stretch at 1–25 (MVNMKCVALIVIVMMAFMMVDPSMG) is a signal peptide. 3 disulfide bridges follow: Cys-29-Cys-40, Cys-34-Cys-46, and Cys-39-Cys-53. Residues 29-53 (CVRGRCPSGMCCSQFGYCGKGPKYC) form the Chitin-binding type-1 domain. Positions 56–86 (ASTTVDHQADVAATKTAKNPTDAKLAGAGSP) are cleaved as a propeptide — removed in mature form.

In terms of assembly, homodimer.

In terms of biological role, chitin-binding protein with a defensive function against numerous chitin containing fungal pathogens. It is also a potent inhibitor of Gram-positive bacteria. The chain is Antimicrobial peptide 2 from Amaranthus caudatus (Love-lies-bleeding).